We begin with the raw amino-acid sequence, 572 residues long: Terminal nucleotidyltransferase 4B (572 aa).

Residues 1-105 form a disordered region; the sequence is MYRSGERLLG…ADGGGVVYSG (105 aa). Polar residues predominate over residues 25-34; the sequence is ETTNNNNNHH. Low complexity predominate over residues 36–76; sequence PGAWARRAGSSASSPPSASSSPHPSAAVPAADPADSASGSS. Residues 89 to 102 are compositionally biased toward gly residues; it reads RAAGGGRADGGGVV. Val151 is covalently cross-linked (Glycyl lysine isopeptide (Lys-Gly) (interchain with G-Cter in SUMO2)). Mg(2+)-binding residues include Asp177 and Asp179. ATP contacts are provided by Gly240, Lys265, Ser283, Tyr284, Asn368, and Arg372. Residues 308 to 368 form the PAP-associated domain; it reads NYGVLLIEFF…YIEDPLQPGN (61 aa). The tract at residues 435-572 is disordered; the sequence is KNRPEPSCNG…RDAPLSDLCR (138 aa). Residues 446-464 are compositionally biased toward low complexity; sequence VSSSSATQSSSSDVDSDAT. Lys470 is covalently cross-linked (Glycyl lysine isopeptide (Lys-Gly) (interchain with G-Cter in SUMO2)). A compositionally biased stretch (polar residues) spans 477 to 494; the sequence is STGNRVGSQDVSLESSQA. Ser484 bears the Phosphoserine mark. Residues Lys497, Lys512, and Lys526 each participate in a glycyl lysine isopeptide (Lys-Gly) (interchain with G-Cter in SUMO2) cross-link. A compositionally biased stretch (low complexity) spans 499-514; that stretch reads QSTQTTNTSNSTNKSQ. Over residues 522-553 the composition is skewed to polar residues; that stretch reads RSSSKGFQGTTQTSHGSLMTNKQHQGKSNNQY. The Basic, involved in binding of the RNA primer signature appears at 557–563; the sequence is KKRKHKR.

It belongs to the DNA polymerase type-B-like family. Component of a nucleolar TRAMP-like complex, an ATP-dependent exosome regulatory complex consisting of a helicase (MTREX), an oligadenylate polymerase (TENT4B or TENT4A), and a substrate specific RNA-binding factor (ZCCHC7 or ZCCHC8). Several TRAMP-like complexes exist with specific compositions and are associated with nuclear, or nucleolar RNA exosomes. Interacts with CPEB1; the interaction is required for TENT4B-mediated translational control. Mg(2+) serves as cofactor. The cofactor is Mn(2+).

The protein resides in the nucleus. It is found in the nucleolus. It localises to the cytoplasm. It carries out the reaction RNA(n) + ATP = RNA(n)-3'-adenine ribonucleotide + diphosphate. In terms of biological role, terminal nucleotidyltransferase that catalyzes preferentially the transfer of ATP and GTP on RNA 3' poly(A) tail creating a heterogeneous 3' poly(A) tail leading to mRNAs stabilization by protecting mRNAs from active deadenylation. Also functions as a catalytic subunit of a TRAMP-like complex which has a poly(A) RNA polymerase activity and is involved in a post-transcriptional quality control mechanism. Polyadenylation with short oligo(A) tails is required for the degradative activity of the exosome on several of its nuclear RNA substrates. Doesn't need a cofactor for polyadenylation activity (in vitro). Required for cytoplasmic polyadenylation of mRNAs involved in carbohydrate metabolism, including the glucose transporter SLC2A1/GLUT1. Plays a role in replication-dependent histone mRNA degradation, probably through terminal uridylation of mature histone mRNAs. May play a role in sister chromatid cohesion. Mediates 3' adenylation of the microRNA MIR21 followed by its 3'-to-5' trimming by the exoribonuclease PARN leading to degradation. Mediates 3' adenylation of H/ACA box snoRNAs (small nucleolar RNAs) followed by its 3'-to-5' trimming by the exoribonuclease PARN which enhances snoRNA stability and maturation. The polypeptide is Terminal nucleotidyltransferase 4B (Homo sapiens (Human)).